The chain runs to 1087 residues: MMPMILTVFLSNNEQILTEVPITPETTCRDVVEFCKEPGEGGCHLAEVWRGSERPIPYDHMMYEHLQKWGPRREEVKFFLRHEDSPTESSEQGARQTQEQRTQRSVVNVPGEKRTENGVGNPRVELTLSELQDMAARQQQQIENQQQMLVAKEQRLHFLKQQERRQQQSVSENEKLQKLKERVEAQENKLKKIRAMRGQVDYSKIMNGNLSAEIERFSAMFQEKKQEVQTAILRVDQLSQQLEDLKKGKLNGFQSYNGRLTGPAAVELKRLYQELQIRNQLNQEQNSKLQQQKELLNKRNMEVAMMDKRISELRERLYGKKIQLNRVNGTSSPQSPLSTSGRVAAVGPYIQVPSTGGFPLPGDPVKPQSLTIASSAAHGRSKSANDGNWPPLKQNSASVKSTQMTGDWKDSGMEGTLKQGAISSQPLPLSALGATEKLGIEIGKGPPPIPGVGKPLPPSYGTYPSSGPLGPGSTSSLERRKEGSLPRPGAGPPSRQKPAPLPPASNAPQPGSSQQIQQRISVPPSPTYPPAGPPAFPTGDGKPELPLTVAIRPFLADKGSRPQSPRKGPQTVNSSSIYSMYLQQATPPKNYQPPAHGTLNKSVKAVYGKPVLPSGSASPSPLPFLHGSLGTGTAQPQPPSDSAEKEPEQEGPSVPGEGSTVESLPRPLSPTKLTPIVHSPLRYQSDADLEALRRKLANAPRPLKKRSSITEPEGPGGPNIQKLLYQRFNTLAGGMEGTPFYQPSPSQDFVGTLADMDNGNTNANGNLDEPFPPRPTAPLPEELAPSSDANDNELPSPEPEELICPQTTHQTAEPTEDNNNNVAPVPSTEQIPSPVAEAPSEEDQVPPAPLSPVIHPPAASASKRTNLKKPNSERTGHGLRVRFNPLALLLDASLEGEFDLVQRIIYEVEDPSKPNDEGITPLHNAVCAGHHHIVKFLLDFGVNVNAADSDGWTPLHCAASCNSVHLCKQLVESGAAIFASTISDIETAADKCEEMEEGYIQCSQFLYGVQEKLGVMNKGTVYALWDYEAQNSDELSFHEGDAITILRRKDENETEWWWARLGDREGYVPKNLLGLYPRIKPRQRTLA.

The segment at 82–122 (HEDSPTESSEQGARQTQEQRTQRSVVNVPGEKRTENGVGNP) is disordered. Over residues 87–106 (TESSEQGARQTQEQRTQRSV) the composition is skewed to polar residues. Phosphoserine occurs at positions 332 and 335. 3 disordered regions span residues 374 to 415 (SSAA…GMEG), 442 to 721 (IGKG…PNIQ), and 734 to 878 (GMEG…TGHG). Over residues 393–405 (KQNSASVKSTQMT) the composition is skewed to polar residues. The segment covering 445 to 458 (GPPPIPGVGKPLPP) has biased composition (pro residues). Low complexity predominate over residues 459–476 (SYGTYPSSGPLGPGSTSS). The segment covering 506–520 (NAPQPGSSQQIQQRI) has biased composition (polar residues). Over residues 523–536 (PPSPTYPPAGPPAF) the composition is skewed to pro residues. Residue R552 is modified to Asymmetric dimethylarginine. A compositionally biased stretch (polar residues) spans 570–589 (QTVNSSSIYSMYLQQATPPK). Low complexity predominate over residues 610 to 625 (PVLPSGSASPSPLPFL). 2 positions are modified to phosphoserine: S679 and S708. A compositionally biased stretch (polar residues) spans 805–831 (PQTTHQTAEPTEDNNNNVAPVPSTEQI). ANK repeat units lie at residues 917–949 (EGITPLHNAVCAGHHHIVKFLLDFGVNVNAADS) and 950–982 (DGWTPLHCAASCNSVHLCKQLVESGAAIFASTI). The 63-residue stretch at 1016–1078 (MNKGTVYALW…PKNLLGLYPR (63 aa)) folds into the SH3 domain.

It belongs to the ASPP family. As to quaternary structure, interacts with P53/TP53; the interaction promotes pro-apoptotic activity.

The protein localises to the cytoplasm. The protein resides in the nucleus. In terms of biological role, regulator that plays a central role in regulation of apoptosis via its interaction with p53/TP53. Regulates TP53 by enhancing the DNA binding and transactivation function of TP53 on the promoters of proapoptotic genes in vivo. This is Apoptosis-stimulating of p53 protein 1 (Ppp1r13b) from Mus musculus (Mouse).